The following is a 301-amino-acid chain: MSNTDLEELRRGTDLVKRGFAKMQKGGVIMDVVTREQARIAEDAGAVAVMHLESVPADIRKRGGVARMADPGGLEDVIDEVSIPVMGKARIGHTAEAQILEATGADMIDESEVLTQADDRYHIDKREFTAPFVCGARNLGEALRRIDEGAAMIRTKGEAGTGDVNQAVTHQRNIQRSIRKLSGMDYEERDEWAREHGAPRELVHETAEMGRLPVVNFAAGGIATPADAALMMQLGCDGIFVGSGIFGAENPQAMGEAVVAAVNNYDDPETLKEIAKSPGKGMKGQANETLPEEEKLQDRGI.

A D-ribose 5-phosphate-binding site is contributed by D31. The Schiff-base intermediate with D-ribose 5-phosphate role is filled by K88. G160 is a D-ribose 5-phosphate binding site. R172 provides a ligand contact to D-glyceraldehyde 3-phosphate. D-ribose 5-phosphate contacts are provided by residues G221 and 242–243 (GS). The disordered stretch occupies residues 273–301 (EIAKSPGKGMKGQANETLPEEEKLQDRGI). The span at 292–301 (EEEKLQDRGI) shows a compositional bias: basic and acidic residues.

This sequence belongs to the PdxS/SNZ family. As to quaternary structure, in the presence of PdxT, forms a dodecamer of heterodimers.

The catalysed reaction is aldehydo-D-ribose 5-phosphate + D-glyceraldehyde 3-phosphate + L-glutamine = pyridoxal 5'-phosphate + L-glutamate + phosphate + 3 H2O + H(+). It functions in the pathway cofactor biosynthesis; pyridoxal 5'-phosphate biosynthesis. Its function is as follows. Catalyzes the formation of pyridoxal 5'-phosphate from ribose 5-phosphate (RBP), glyceraldehyde 3-phosphate (G3P) and ammonia. The ammonia is provided by the PdxT subunit. Can also use ribulose 5-phosphate and dihydroxyacetone phosphate as substrates, resulting from enzyme-catalyzed isomerization of RBP and G3P, respectively. The polypeptide is Pyridoxal 5'-phosphate synthase subunit PdxS (Natronomonas pharaonis (strain ATCC 35678 / DSM 2160 / CIP 103997 / JCM 8858 / NBRC 14720 / NCIMB 2260 / Gabara) (Halobacterium pharaonis)).